The sequence spans 550 residues: Flagellin (550 aa).

This sequence belongs to the bacterial flagellin family.

Its subcellular location is the secreted. The protein localises to the bacterial flagellum. Functionally, flagellin is the subunit protein which polymerizes to form the filaments of bacterial flagella. This Shigella flexneri protein is Flagellin (fliC).